We begin with the raw amino-acid sequence, 564 residues long: MSEITLGRYLFERLNQVDVKTIFGLPGDFNLSLLDKIYEVEGMRWAGNANELNAAYAADGYARIKGMSCIITTFGVGELSALNGIAGSYAEHVGVLHVVGVPSISSQAKQLLLHHTLGNGDFTVFHRMSANISETTAMVTDIATAPAEIDRCIRTTYITQRPVYLGLPANLVDLKVPAKLLETPIDLSLKPNDPEAETEVVDTVLELIKAAKNPVILADACASRHDVKAETKKLIDATQFPSFVTPMGKGSIDEQHPRFGGVYVGTLSRPEVKEAVESADLILSVGALLSDFNTGSFSYSYKTKNIVEFHSDYIKIRNATFPGVQMKFALQKLLNAVPEAIKGYKPVPVPARVPENKSCDPATPLKQEWMWNQVSKFLQEGDVVITETGTSAFGINQTPFPNNAYGISQVLWGSIGFTTGACLGAAFAAEEIDPKKRVILFIGDGSLQLTVQEISTMIRWGLKPYLFVLNNDGYTIERLIHGEKAGYNDIQNWDHLALLPTFGAKDYENHRVATTGEWDKLTQDKEFNKNSKIRMIEVMLPVMDAPTSLIEQAKLTASINAKQE.

The pyruvate site is built by D28 and H115. Thiamine diphosphate-binding positions include T390 and 413 to 415 (GSI). Residue D444 coordinates Mg(2+). Residues 445–446 (GS) and 471–476 (NDGYTI) contribute to the thiamine diphosphate site. N471 and G473 together coordinate Mg(2+). Pyruvate is bound at residue E477.

The protein belongs to the TPP enzyme family. As to quaternary structure, homotetramer. Requires Mg(2+) as cofactor. The cofactor is thiamine diphosphate.

The catalysed reaction is a 2-oxocarboxylate + H(+) = an aldehyde + CO2. The enzyme catalyses pyruvate + H(+) = acetaldehyde + CO2. This is Pyruvate decarboxylase (PDC1) from Candida glabrata (strain ATCC 2001 / BCRC 20586 / JCM 3761 / NBRC 0622 / NRRL Y-65 / CBS 138) (Yeast).